Reading from the N-terminus, the 613-residue chain is Portal protein (613 aa).

The tract at residues 577–613 (ATGGDHGIRQAPSARGDTEPDHAKSKPARDPPPGAGS) is disordered. Residues 592–605 (GDTEPDHAKSKPAR) are compositionally biased toward basic and acidic residues.

It belongs to the herpesviridae portal protein family. As to quaternary structure, homododecamerizes. Interacts with terminase subunits TRM1 and TRM3.

Its subcellular location is the virion. The protein resides in the host nucleus. The protein localises to the host cytoplasm. Its function is as follows. Forms a portal in the viral capsid through which viral DNA is translocated during DNA packaging. Assembles as a dodecamer at a single fivefold axe of the T=16 icosahedric capsid. Binds to the molecular motor that translocates the viral DNA, termed terminase. In Epstein-Barr virus (strain B95-8) (HHV-4), this protein is Portal protein.